A 1082-amino-acid polypeptide reads, in one-letter code: Transcription elongation factor SPT5 (1082 aa).

A compositionally biased stretch (acidic residues) spans Met-1–Glu-28. The segment at Met-1–Asp-88 is disordered. Ser-32 and Ser-36 each carry phosphoserine. Composition is skewed to acidic residues over residues Lys-38 to Asp-62 and Asp-76 to Asp-88. A Glycyl lysine isopeptide (Lys-Gly) (interchain with G-Cter in SUMO2) cross-link involves residue Lys-141. The segment at Asp-174–Val-268 is interaction with SUPT4H1 and SUPT4H2. The region spanning Leu-271–Lys-304 is the KOW 1 domain. The segment at Tyr-311–Phe-418 is interaction with RNA polymerase II. A UBR5-degron motif is present at residues Lys-326 to Arg-332. KOW domains lie at Phe-418–Met-449 and Phe-470–Phe-501. RNA is bound at residue Lys-577. The 34-residue stretch at Ile-592–Lys-625 folds into the KOW 4 domain. Arg-617 serves as a coordination point for DNA. Phosphothreonine is present on Thr-661. Phosphoserine occurs at positions 664 and 684. Positions Ser-669–Arg-694 are disordered. Over residues Gln-678–Arg-690 the composition is skewed to gly residues. An asymmetric dimethylarginine; alternate mark is found at Arg-690 and Arg-692. Arg-690 and Arg-692 each carry omega-N-methylarginine; alternate. Arg-692 is subject to Symmetric dimethylarginine; alternate. The region spanning Glu-698 to His-731 is the KOW 5 domain. Residue Lys-712 is modified to N6-acetyllysine. Residues Arg-741 to Pro-801 are compositionally biased toward polar residues. A disordered region spans residues Arg-741 to Asp-972. The stretch at Asp-748 to Gly-753 is one CTR1-1; approximate repeat. The segment at Asp-748 to Gln-811 is 9 X 7 AA approximate tandem repeats of G-S-[QR]-T-P-X-[YQ], motif CTR1. Residues Gly-754–Tyr-759 form a CTR1-2 repeat. The CTR1-3 repeat unit spans residues Gly-760–Tyr-765. The CTR1-4 repeat unit spans residues Gly-766–Tyr-772. 2 positions are modified to phosphothreonine; by CDK9: Thr-769 and Thr-778. The CTR1-5 repeat unit spans residues Gly-775–Tyr-781. A CTR1-6 repeat occupies Gly-782–Gln-788. Ser-783 carries the phosphoserine modification. Phosphothreonine occurs at positions 785 and 793. One copy of the CTR1-7 repeat lies at Gly-790–Tyr-796. One copy of the CTR1-8 repeat lies at Gly-797–His-803. The residue at position 798 (Ser-798) is a Phosphoserine. Residues Thr-800 and Thr-808 each carry the phosphothreonine modification. The CTR1-9 repeat unit spans residues Gly-805–Gln-811. Residues Glu-828–Pro-838 are compositionally biased toward acidic residues. One copy of the CTR2-1 repeat lies at Pro-838–Tyr-845. Positions Pro-838–Tyr-944 are 10 X 8 AA approximate tandem repeats of P-[TS]-P-S-P-[QA]-[SG]-Y, motif CTR2. Residues Thr-848 to Tyr-856 form a CTR2-2; approximate repeat. The span at Pro-851–Ser-860 shows a compositional bias: pro residues. A CTR2-3; approximate repeat occupies Pro-857–Gln-863. A compositionally biased stretch (polar residues) spans Ser-861–Phe-884. One copy of the CTR2-4; half-length repeat lies at Thr-875–Tyr-879. The CTR2-5; approximate repeat unit spans residues Pro-890 to Tyr-896. Low complexity predominate over residues Pro-890–Tyr-905. A CTR2-6 repeat occupies Pro-898 to Tyr-905. The stretch at Pro-910–Tyr-915 is one CTR2-7; approximate repeat. The stretch at Thr-918–Tyr-924 is one CTR2-8 repeat. A CTR2-9 repeat occupies Pro-926 to Tyr-933. A CTR2-10 repeat occupies Pro-937–Tyr-944. Residue Thr-1028 is modified to Phosphothreonine. Lys-1031 participates in a covalent cross-link: Glycyl lysine isopeptide (Lys-Gly) (interchain with G-Cter in SUMO2).

The protein belongs to the SPT5 family. Interacts with SUPT4H1 to form DSIF. DSIF interacts with the positive transcription elongation factor b complex (P-TEFb complex), which is composed of CDK9 and cyclin-T (CCNT1 or CCNT2). DSIF interacts with RNA polymerase II, and this interaction is reduced by phosphorylation of the C-terminal domain (CTD) of POLR2A by P-TEFb. DSIF also interacts with the NELF complex, which is composed of NELFA, NELFB, NELFD and NELFE, and this interaction occurs following prior binding of DSIF to RNA polymerase II. Also interacts with PRMT1/HRMT1L2, HTATSF1/TATSF1, RNGTT/CAP1A, PRMT5/SKB1, SUPT6H, and can interact with PIN1. Component of a complex which is at least composed of HTATSF1/Tat-SF1, the P-TEFb complex components CDK9 and CCNT1, RNA polymerase II, SUPT5H, and NCL/nucleolin. Interacts with MCM3AP. In terms of processing, methylated by PRMT1/HRMT1L2 and PRMT5/SKB1. Methylation negatively regulates interaction with P-TEFb and RNA polymerase II. Phosphorylated by CDK7 and CDK9. Phosphorylation by P-TEFb (CDK9) at Thr residues of the C-terminal repeats alleviates transcriptional pausing and promotes transcription elongation. Dephosphorylated by the INTAC complex when transcripts are unfavorably configured for transcriptional elongation, leading to premature transcription termination: dephosphorylation is mediated by the PPP2CA component of the INTAC complex. Dephosphorylated by the PNUTS-PP1 complex in termination zones downstream of poly(A) sites, thereby promoting deceleration of RNA polymerase II transcription. Dephosphorylated by the PNUTS-PP1 complex in termination zones downstream of poly(A) sites, thereby promoting deceleration of RNA polymerase II transcription. Phosphorylation may also stimulate interaction with PIN1. Bulk phosphorylation occurs predominantly in mitosis. Post-translationally, ubiquitinated by UBR5 when not assembled in the DSIF complex, leading to its degradation: UBR5 recognizes and binds a degron that is not accessible when SUPT5H is part of the DSIF complex.

It localises to the nucleus. In terms of biological role, component of the DRB sensitivity-inducing factor complex (DSIF complex), which regulates mRNA processing and transcription elongation by RNA polymerase II. DSIF positively regulates mRNA capping by stimulating the mRNA guanylyltransferase activity of RNGTT/CAP1A. DSIF also acts cooperatively with the negative elongation factor complex (NELF complex) to enhance transcriptional pausing at sites proximal to the promoter. Transcriptional pausing may facilitate the assembly of an elongation competent RNA polymerase II complex. DSIF and NELF promote pausing by inhibition of the transcription elongation factor TFIIS/S-II. TFIIS/S-II binds to RNA polymerase II at transcription pause sites and stimulates the weak intrinsic nuclease activity of the enzyme. Cleavage of blocked transcripts by RNA polymerase II promotes the resumption of transcription from the new 3' terminus and may allow repeated attempts at transcription through natural pause sites. Following phosphorylation by CDK9, DSIF can also positively regulate transcriptional elongation. This is Transcription elongation factor SPT5 (Supt5h) from Mus musculus (Mouse).